The following is a 388-amino-acid chain: MVPPPPPPSRLLLVALVGLLSLHEVVAEPAEEAGTRCPEGLWPLPPQVLPRVTYTQVRQGQAEGITFFYHPCAHLWLKLQLAVLAHLCVAKPTLIPDFSLPWDRPLVLTAWGTALEMAWIEPAWAAQWLKRQWRRRRRKQRKSVWFLSDNLFGPTPMMPAPRRGKLCGRRCVQAPTLAFALRSWRPPGVEVTSRGPRRSSLSVVKKRGLRAALGLQSTPSGLRVSLASSQSLKAQQRTLGNSSVAPVSLMTGVTEGNGRFRTEAQMPSGQGNPGGCACPGQVSPAPRAAVPPRVARGPTPRTEEAAWAAMALTFLLVLLTLATLCTRLHRNFRRSESIYWGPTSDSQDTVAAILKRRLPLPSRRIKRSRRRPLLPPTPDSGPDSESSD.

The first 27 residues, M1–A27, serve as a signal peptide directing secretion. Residues E28–E304 lie on the Extracellular side of the membrane. Residues A305–C325 form a helical membrane-spanning segment. Over T326–D388 the chain is Cytoplasmic. Residues P361–P372 show a composition bias toward basic residues. The interval P361 to D388 is disordered.

The protein localises to the cell membrane. It localises to the cytoplasm. Functionally, may act as a tumor suppressor. Inhibits tumor cell growth, when overexpressed. The chain is Tumor protein p53-inducible protein 13 (Tp53i13) from Rattus norvegicus (Rat).